A 90-amino-acid chain; its full sequence is RNA-binding protein Hfq (90 aa).

A Sm domain is found at 9–68 (DPFLNALRRERVPVSIYLVNGIKLQGQVESFDQFVILLKNTVSQMVYKHAISTVVPARPF).

It belongs to the Hfq family. As to quaternary structure, homohexamer.

Its function is as follows. RNA chaperone that binds small regulatory RNA (sRNAs) and mRNAs to facilitate mRNA translational regulation in response to envelope stress, environmental stress and changes in metabolite concentrations. Also binds with high specificity to tRNAs. The sequence is that of RNA-binding protein Hfq from Shewanella oneidensis (strain ATCC 700550 / JCM 31522 / CIP 106686 / LMG 19005 / NCIMB 14063 / MR-1).